The primary structure comprises 46 residues: MKKFRWVALVVVVLACLLLWAQVFNMMCDQDVQFFSGICAINQFIP.

Residues 6 to 26 (WVALVVVVLACLLLWAQVFNM) form a helical membrane-spanning segment.

It belongs to the MgrB family. May form homooligomers. Probably interacts with the periplasmic domain of PhoQ.

Its subcellular location is the cell inner membrane. In terms of biological role, phoP-regulated transcription is redox-sensitive, being activated when the periplasm becomes more reducing. MgrB acts between DsbA/DsbB and PhoP/PhoQ in this pathway. Represses PhoP/PhoQ signaling, possibly by binding to the periplasmic domain of PhoQ, altering its activity and that of downstream effector PhoP. The polypeptide is PhoP/PhoQ regulator MgrB (Escherichia coli O6:K15:H31 (strain 536 / UPEC)).